We begin with the raw amino-acid sequence, 342 residues long: MEENFDIREQQLTTKERDFENALRPLNFEDFSGQDKVVDNLRIFVKAARLRAEALDHVLLHGPPGLGKTTLSNIIANELGVGFKVTSGPVLDKPGDLAGVLTSLEPNDVLFIDEIHRLSPVVEEYLYSAMEDYRIDIMIDKGPSARSIQLELSPFTLVGATTRSGLLTAPLRARFGINLHLEYYDDDVLTSIIRRSATILNVPCDVKAAGEIASRSRGTPRIANALLRRVRDFAQVKGSGRIDVEIARFALEALNIDRYGLDEIDNKILCTIIDKFKGGPVGLTTIATALGEDAGTIEEVYEPFLIKEGFLKRTPRGREVTELAYMHLGRSIYNSQKTLFDD.

Residues 1–184 (MEENFDIREQ…FGINLHLEYY (184 aa)) form a large ATPase domain (RuvB-L) region. Residues Leu-23, Arg-24, Gly-65, Lys-68, Thr-69, Thr-70, 131–133 (EDY), Arg-174, Tyr-184, and Arg-221 contribute to the ATP site. Thr-69 contacts Mg(2+). The segment at 185–255 (DDDVLTSIIR…IARFALEALN (71 aa)) is small ATPAse domain (RuvB-S). Residues 258–342 (RYGLDEIDNK…YNSQKTLFDD (85 aa)) are head domain (RuvB-H). DNA contacts are provided by Arg-313 and Arg-318.

It belongs to the RuvB family. As to quaternary structure, homohexamer. Forms an RuvA(8)-RuvB(12)-Holliday junction (HJ) complex. HJ DNA is sandwiched between 2 RuvA tetramers; dsDNA enters through RuvA and exits via RuvB. An RuvB hexamer assembles on each DNA strand where it exits the tetramer. Each RuvB hexamer is contacted by two RuvA subunits (via domain III) on 2 adjacent RuvB subunits; this complex drives branch migration. In the full resolvosome a probable DNA-RuvA(4)-RuvB(12)-RuvC(2) complex forms which resolves the HJ.

The protein resides in the cytoplasm. The catalysed reaction is ATP + H2O = ADP + phosphate + H(+). Its function is as follows. The RuvA-RuvB-RuvC complex processes Holliday junction (HJ) DNA during genetic recombination and DNA repair, while the RuvA-RuvB complex plays an important role in the rescue of blocked DNA replication forks via replication fork reversal (RFR). RuvA specifically binds to HJ cruciform DNA, conferring on it an open structure. The RuvB hexamer acts as an ATP-dependent pump, pulling dsDNA into and through the RuvAB complex. RuvB forms 2 homohexamers on either side of HJ DNA bound by 1 or 2 RuvA tetramers; 4 subunits per hexamer contact DNA at a time. Coordinated motions by a converter formed by DNA-disengaged RuvB subunits stimulates ATP hydrolysis and nucleotide exchange. Immobilization of the converter enables RuvB to convert the ATP-contained energy into a lever motion, pulling 2 nucleotides of DNA out of the RuvA tetramer per ATP hydrolyzed, thus driving DNA branch migration. The RuvB motors rotate together with the DNA substrate, which together with the progressing nucleotide cycle form the mechanistic basis for DNA recombination by continuous HJ branch migration. Branch migration allows RuvC to scan DNA until it finds its consensus sequence, where it cleaves and resolves cruciform DNA. This Phocaeicola vulgatus (strain ATCC 8482 / DSM 1447 / JCM 5826 / CCUG 4940 / NBRC 14291 / NCTC 11154) (Bacteroides vulgatus) protein is Holliday junction branch migration complex subunit RuvB.